A 192-amino-acid chain; its full sequence is UPF0301 protein Bphyt_0868 (192 aa).

Belongs to the UPF0301 (AlgH) family.

This chain is UPF0301 protein Bphyt_0868, found in Paraburkholderia phytofirmans (strain DSM 17436 / LMG 22146 / PsJN) (Burkholderia phytofirmans).